Here is a 320-residue protein sequence, read N- to C-terminus: Nicotianamine synthase 3 (320 aa).

Belongs to the nicotianamine synthase (NAS)-like family. In shoots.

The enzyme catalyses 3 S-adenosyl-L-methionine = nicotianamine + 3 S-methyl-5'-thioadenosine + 3 H(+). Its function is as follows. Synthesizes nicotianamine, a polyamine which serves as a sensor for the physiological iron status within the plant, and/or might be involved in the transport of iron. This Arabidopsis thaliana (Mouse-ear cress) protein is Nicotianamine synthase 3 (NAS3).